Reading from the N-terminus, the 326-residue chain is Tagatose 1,6-diphosphate aldolase (326 aa).

It belongs to the aldolase LacD family.

It catalyses the reaction D-tagatofuranose 1,6-bisphosphate = D-glyceraldehyde 3-phosphate + dihydroxyacetone phosphate. It functions in the pathway carbohydrate metabolism; D-tagatose 6-phosphate degradation; D-glyceraldehyde 3-phosphate and glycerone phosphate from D-tagatose 6-phosphate: step 2/2. In Staphylococcus aureus (strain MW2), this protein is Tagatose 1,6-diphosphate aldolase.